The following is a 503-amino-acid chain: MNVFFMFSLLFLAALGSCADDGNPLEECFRETDYEEFLEIAKNGLSATSNPKHVVIVGAGMSGLSAAYVLANAGHQVTVLEASKRAGGRVRTYRNDKEGWYANLGPMRLPEKHRIVREYIRKFGLQLNEFSQENENAWYFIKNIRKRVGEVNKDPGVLEYPVKPSEVGKSAGQLYEESLQKAVEELRRTNCSYMLNKYDTYSTKEYLLKEGNLSPGAVDMIGDLLNEDSGYYVSFIESLKHDDIFAYEKRFDEIVGGMDKLPTSMYQAIQEKVRLNVRVIKIQQDVKEVTVTYQTSAKETLSVTADYVIVCTTSRAARRIKFEPPLPPKKAHALRSVHYRSGTKIFLTCTKKFWEDDGIHGGKSTTDLPSRFIYYPNHNFPSGVGVIIAYGIGDDANFFQALDFKDCGDIVINDLSLIHQLPKEEIQAFCRPSMIQRWSLDKYAMGGITTFTPYQFQHFSEALTAPVDRIYFAGEYTAQAHGWIDSTIKSGLTAARDVNRASE.

The signal sequence occupies residues 1 to 18; sequence MNVFFMFSLLFLAALGSC. Cysteine 28 and cysteine 191 are oxidised to a cystine. Residues 61 to 62, 81 to 82, arginine 89, and 105 to 108 contribute to the FAD site; these read MS, EA, and GPMR. Arginine 108 is a substrate binding site. Asparagine 190 carries an N-linked (GlcNAc...) asparagine glycan. Histidine 241 contacts substrate. Valine 279 is a binding site for FAD. Cysteines 349 and 430 form a disulfide. Tyrosine 390 contacts substrate. FAD-binding positions include glutamate 475 and 482 to 487; that span reads GWIDST. 482 to 483 contributes to the substrate binding site; the sequence is GW.

This sequence belongs to the flavin monoamine oxidase family. FIG1 subfamily. In terms of assembly, homodimer; non-covalently linked. Requires FAD as cofactor. Post-translationally, N-glycosylated. The enzymatic activity is not affected by deglycosylation. As to expression, expressed by the venom gland.

The protein localises to the secreted. It carries out the reaction an L-alpha-amino acid + O2 + H2O = a 2-oxocarboxylate + H2O2 + NH4(+). It catalyses the reaction L-leucine + O2 + H2O = 4-methyl-2-oxopentanoate + H2O2 + NH4(+). The enzyme catalyses L-phenylalanine + O2 + H2O = 3-phenylpyruvate + H2O2 + NH4(+). The catalysed reaction is L-methionine + O2 + H2O = 4-methylsulfanyl-2-oxobutanoate + H2O2 + NH4(+). It carries out the reaction L-isoleucine + O2 + H2O = (S)-3-methyl-2-oxopentanoate + H2O2 + NH4(+). Catalyzes an oxidative deamination of predominantly hydrophobic and aromatic L-amino acids, thus producing hydrogen peroxide that may contribute to the diverse toxic effects of this enzyme. Is highly active on L-Met, L-Leu, L-Phe and L-Ile. Exhibits diverse biological activities, such as antibacterial on both Gram-positive and Gram-negative bacteria and antiparasitic activities, as well as induction of platelet aggregation. Effects of snake L-amino oxidases on platelets are controversial, since they either induce aggregation or inhibit agonist-induced aggregation. These different effects are probably due to different experimental conditions. This protein may also have activities in hemorrhage, hemolysis, edema, and apoptosis. This is L-amino-acid oxidase from Bothrops pauloensis (Neuwied's lancehead).